The sequence spans 326 residues: uncharacterized protein (326 aa).

Transmembrane regions (helical) follow at residues 9–29 (WVVL…RWSL) and 33–53 (ISIC…ANSY). NADP(+) is bound by residues Asp120, Asn148, Tyr214, Lys218, and Thr252. Catalysis depends on Tyr214, which acts as the Proton acceptor. Lys218 acts as the Lowers pKa of active site Tyr in catalysis.

The protein belongs to the short-chain dehydrogenases/reductases (SDR) family.

Its subcellular location is the mitochondrion membrane. Its function is as follows. Involved in the resistance to DNA-damaging agents. This is an uncharacterized protein from Saccharomyces cerevisiae (strain ATCC 204508 / S288c) (Baker's yeast).